Consider the following 313-residue polypeptide: UDP-N-acetylglucosamine 3-dehydrogenase (313 aa).

Residues histidine 13, leucine 14, and arginine 38 each coordinate NAD(+).

Belongs to the Gfo/Idh/MocA family. In terms of assembly, exists in multiple oligomeric states.

It carries out the reaction UDP-N-acetyl-alpha-D-glucosamine + NAD(+) = UDP-2-acetamido-3-dehydro-2-deoxy-alpha-D-glucopyranose + NADH + H(+). The protein operates within bacterial outer membrane biogenesis; LPS lipid A biosynthesis. Functionally, oxidoreductase involved in the synthesis of 2,3-diamino-2,3-dideoxy-D-glucopyranose (GlcN3N), which is a component of lipid A in some species. Catalyzes the NAD(+)-dependent oxidation of the glucosamine 3-position of UDP-N-acetyl-glucosamine (UDP-GlcNAc) to a ketone moiety, forming UDP-2-acetamido-3-dehydro-2-deoxy-alpha-D-glucopyranose (UDP-3-oxo-GlcNAc). Is specific for UDP-GlcNAc, no activity is observed with UDP-glucose (UDP-Glc), UDP-glucoronic acid (UDP-GlcA), UDP-galactose (UDP-Gal) and UDP-N-acetylgalactosamine (UDP-GalNAc). Cannot use FAD(+) and NADP(+). The sequence is that of UDP-N-acetylglucosamine 3-dehydrogenase from Acidithiobacillus ferrooxidans (strain ATCC 23270 / DSM 14882 / CIP 104768 / NCIMB 8455) (Ferrobacillus ferrooxidans (strain ATCC 23270)).